Reading from the N-terminus, the 187-residue chain is Reactive Intermediate Deaminase A, chloroplastic (187 aa).

Residues 1 to 58 (MTWSVFRSINTPTLDLSTALRSTRTPLVAAGVGCATFAGVSLFRMSSRSPPFASLSVS) constitute a chloroplast transit peptide. Arg165 contacts substrate.

Belongs to the RutC family. Expressed in leaves, petiols, petals, carpels and shoot apex.

Its subcellular location is the plastid. The protein resides in the chloroplast. It catalyses the reaction 2-iminobutanoate + H2O = 2-oxobutanoate + NH4(+). It carries out the reaction 2-iminopropanoate + H2O = pyruvate + NH4(+). Its pathway is amino-acid biosynthesis; L-isoleucine biosynthesis; 2-oxobutanoate from L-threonine. Its function is as follows. Hydrolyzes the Ser-derived enamine/imine product of Thr dehydratase, protecting the plastidial branched-chain aminotransferase BCAT3 (AC Q9M401) from inactivation. Involved in Ile biosynthesis. The sequence is that of Reactive Intermediate Deaminase A, chloroplastic from Arabidopsis thaliana (Mouse-ear cress).